Reading from the N-terminus, the 423-residue chain is Hemoglobinase (423 aa).

The first 18 residues, 1-18 (MFYSIFFIHILRIVLVDC), serve as a signal peptide directing secretion. Residues 19 to 29 (NEYSEENVDDR) constitute a propeptide that is removed on maturation. Residues His145 and Cys186 contribute to the active site. The tract at residues 286–307 (RKKASTEHDEPPMKPKDSIPSR) is disordered. The propeptide occupies 286-423 (RKKASTEHDE…INGVIRKVCG (138 aa)). Residues 289-305 (ASTEHDEPPMKPKDSIP) show a composition bias toward basic and acidic residues.

Belongs to the peptidase C13 family. In terms of tissue distribution, gut.

The enzyme catalyses Hydrolysis of proteins and small molecule substrates at -Asn-|-Xaa- bonds.. Its function is as follows. This protease is used by the parasite for degradation of the host globin. This is Hemoglobinase (HAEM) from Schistosoma japonicum (Blood fluke).